Reading from the N-terminus, the 206-residue chain is MQVELLNDQGLASSKVDVPDTVFGREYNESLIHQVVVAFQANARQGTRAQKDREQVRHSTKKPFKQKGTGRARAGMTSSPLWRGGGRIFPNMPDENFTQKINKKMYRAGMASIFSQLAREGRLAVVDSLAVDSPKTKVLADKFKAMNLNSVLVIADVVDENLYLASRNLVNILVVEPRYADPVSLVHYKKVLVTKAAMDQLKEMFA.

Positions 46-77 (GTRAQKDREQVRHSTKKPFKQKGTGRARAGMT) are disordered. Residues 58 to 70 (HSTKKPFKQKGTG) are compositionally biased toward basic residues.

This sequence belongs to the universal ribosomal protein uL4 family. Part of the 50S ribosomal subunit.

One of the primary rRNA binding proteins, this protein initially binds near the 5'-end of the 23S rRNA. It is important during the early stages of 50S assembly. It makes multiple contacts with different domains of the 23S rRNA in the assembled 50S subunit and ribosome. In terms of biological role, forms part of the polypeptide exit tunnel. The sequence is that of Large ribosomal subunit protein uL4 from Polaromonas sp. (strain JS666 / ATCC BAA-500).